Reading from the N-terminus, the 155-residue chain is Aspartate carbamoyltransferase regulatory chain (155 aa).

Zn(2+) contacts are provided by cysteine 112, cysteine 117, cysteine 138, and cysteine 141.

The protein belongs to the PyrI family. Contains catalytic and regulatory chains. Zn(2+) is required as a cofactor.

In terms of biological role, involved in allosteric regulation of aspartate carbamoyltransferase. This chain is Aspartate carbamoyltransferase regulatory chain, found in Methanocorpusculum labreanum (strain ATCC 43576 / DSM 4855 / Z).